The sequence spans 372 residues: 4-hydroxy-3-methylbut-2-en-1-yl diphosphate synthase (flavodoxin) (372 aa).

Cysteine 270, cysteine 273, cysteine 305, and glutamate 312 together coordinate [4Fe-4S] cluster.

This sequence belongs to the IspG family. [4Fe-4S] cluster is required as a cofactor.

It carries out the reaction (2E)-4-hydroxy-3-methylbut-2-enyl diphosphate + oxidized [flavodoxin] + H2O + 2 H(+) = 2-C-methyl-D-erythritol 2,4-cyclic diphosphate + reduced [flavodoxin]. It functions in the pathway isoprenoid biosynthesis; isopentenyl diphosphate biosynthesis via DXP pathway; isopentenyl diphosphate from 1-deoxy-D-xylulose 5-phosphate: step 5/6. Converts 2C-methyl-D-erythritol 2,4-cyclodiphosphate (ME-2,4cPP) into 1-hydroxy-2-methyl-2-(E)-butenyl 4-diphosphate. The chain is 4-hydroxy-3-methylbut-2-en-1-yl diphosphate synthase (flavodoxin) from Alcanivorax borkumensis (strain ATCC 700651 / DSM 11573 / NCIMB 13689 / SK2).